Consider the following 509-residue polypeptide: Maturase K (509 aa).

The protein belongs to the intron maturase 2 family. MatK subfamily.

It is found in the plastid. It localises to the chloroplast. In terms of biological role, usually encoded in the trnK tRNA gene intron. Probably assists in splicing its own and other chloroplast group II introns. In Nicotiana plumbaginifolia (Leadwort-leaved tobacco), this protein is Maturase K.